A 242-amino-acid chain; its full sequence is ATP synthase subunit a (242 aa).

The next 6 helical transmembrane spans lie at Ser-29 to Ser-49, Phe-84 to Ile-104, Ile-114 to Val-134, Phe-140 to Ile-160, Val-189 to Met-209, and Val-210 to Leu-230.

The protein belongs to the ATPase A chain family. As to quaternary structure, F-type ATPases have 2 components, CF(1) - the catalytic core - and CF(0) - the membrane proton channel. CF(1) has five subunits: alpha(3), beta(3), gamma(1), delta(1), epsilon(1). CF(0) has three main subunits: a(1), b(2) and c(9-12). The alpha and beta chains form an alternating ring which encloses part of the gamma chain. CF(1) is attached to CF(0) by a central stalk formed by the gamma and epsilon chains, while a peripheral stalk is formed by the delta and b chains.

Its subcellular location is the cell inner membrane. In terms of biological role, key component of the proton channel; it plays a direct role in the translocation of protons across the membrane. The protein is ATP synthase subunit a of Rickettsia bellii (strain OSU 85-389).